We begin with the raw amino-acid sequence, 466 residues long: Glutamate--tRNA ligase (466 aa).

The short motif at 10–20 (PSPTGALHIGG) is the 'HIGH' region element. The Zn(2+) site is built by Cys99, Cys101, Cys126, and Asp128. The short motif at 239 to 243 (KLSKR) is the 'KMSKS' region element. Residue Lys242 participates in ATP binding.

It belongs to the class-I aminoacyl-tRNA synthetase family. Glutamate--tRNA ligase type 1 subfamily. As to quaternary structure, monomer. Zn(2+) is required as a cofactor.

The protein localises to the cytoplasm. It catalyses the reaction tRNA(Glu) + L-glutamate + ATP = L-glutamyl-tRNA(Glu) + AMP + diphosphate. Its function is as follows. Catalyzes the attachment of glutamate to tRNA(Glu) in a two-step reaction: glutamate is first activated by ATP to form Glu-AMP and then transferred to the acceptor end of tRNA(Glu). This chain is Glutamate--tRNA ligase, found in Pelagibacter ubique (strain HTCC1062).